Consider the following 240-residue polypeptide: Phosphoribosylaminoimidazole-succinocarboxamide synthase (240 aa).

This sequence belongs to the SAICAR synthetase family.

It catalyses the reaction 5-amino-1-(5-phospho-D-ribosyl)imidazole-4-carboxylate + L-aspartate + ATP = (2S)-2-[5-amino-1-(5-phospho-beta-D-ribosyl)imidazole-4-carboxamido]succinate + ADP + phosphate + 2 H(+). It functions in the pathway purine metabolism; IMP biosynthesis via de novo pathway; 5-amino-1-(5-phospho-D-ribosyl)imidazole-4-carboxamide from 5-amino-1-(5-phospho-D-ribosyl)imidazole-4-carboxylate: step 1/2. In Limosilactobacillus fermentum (strain NBRC 3956 / LMG 18251) (Lactobacillus fermentum), this protein is Phosphoribosylaminoimidazole-succinocarboxamide synthase.